The primary structure comprises 124 residues: Small ribosomal subunit protein uS13 (124 aa).

Positions 95–124 (GLPVRGQRTRHNARTRKGPRKTVGAKKGKR) are disordered. The span at 101–124 (QRTRHNARTRKGPRKTVGAKKGKR) shows a compositional bias: basic residues.

Belongs to the universal ribosomal protein uS13 family. Part of the 30S ribosomal subunit. Forms a loose heterodimer with protein S19. Forms two bridges to the 50S subunit in the 70S ribosome.

Located at the top of the head of the 30S subunit, it contacts several helices of the 16S rRNA. In the 70S ribosome it contacts the 23S rRNA (bridge B1a) and protein L5 of the 50S subunit (bridge B1b), connecting the 2 subunits; these bridges are implicated in subunit movement. Contacts the tRNAs in the A and P-sites. The sequence is that of Small ribosomal subunit protein uS13 from Coprothermobacter proteolyticus (strain ATCC 35245 / DSM 5265 / OCM 4 / BT).